A 714-amino-acid polypeptide reads, in one-letter code: DNA ligase (714 aa).

NAD(+) contacts are provided by residues 47 to 51 (DAEYD), 96 to 97 (SL), and Glu-128. Lys-130 (N6-AMP-lysine intermediate) is an active-site residue. Residues Arg-151, Glu-188, Lys-306, and Lys-330 each coordinate NAD(+). Residues Cys-435, Cys-438, Cys-453, and Cys-459 each coordinate Zn(2+). One can recognise a BRCT domain in the interval 637–714 (RRDTAVAGKT…TEDEWLALIS (78 aa)).

The protein belongs to the NAD-dependent DNA ligase family. LigA subfamily. Mg(2+) serves as cofactor. The cofactor is Mn(2+).

The catalysed reaction is NAD(+) + (deoxyribonucleotide)n-3'-hydroxyl + 5'-phospho-(deoxyribonucleotide)m = (deoxyribonucleotide)n+m + AMP + beta-nicotinamide D-nucleotide.. In terms of biological role, DNA ligase that catalyzes the formation of phosphodiester linkages between 5'-phosphoryl and 3'-hydroxyl groups in double-stranded DNA using NAD as a coenzyme and as the energy source for the reaction. It is essential for DNA replication and repair of damaged DNA. This chain is DNA ligase, found in Rhodopseudomonas palustris (strain HaA2).